A 237-amino-acid chain; its full sequence is Phosphoribosylaminoimidazole-succinocarboxamide synthase (237 aa).

The protein belongs to the SAICAR synthetase family.

The catalysed reaction is 5-amino-1-(5-phospho-D-ribosyl)imidazole-4-carboxylate + L-aspartate + ATP = (2S)-2-[5-amino-1-(5-phospho-beta-D-ribosyl)imidazole-4-carboxamido]succinate + ADP + phosphate + 2 H(+). Its pathway is purine metabolism; IMP biosynthesis via de novo pathway; 5-amino-1-(5-phospho-D-ribosyl)imidazole-4-carboxamide from 5-amino-1-(5-phospho-D-ribosyl)imidazole-4-carboxylate: step 1/2. In Citrobacter koseri (strain ATCC BAA-895 / CDC 4225-83 / SGSC4696), this protein is Phosphoribosylaminoimidazole-succinocarboxamide synthase.